The chain runs to 184 residues: Holliday junction branch migration complex subunit RuvA (184 aa).

The segment at 1-64 (MIRAIEGIIT…EDANLLYGFL (64 aa)) is domain I. The domain II stretch occupies residues 65-144 (DTNEQKMFEM…SDESVPGYQN (80 aa)). A region of interest (flexible linker) is located at residue N144. The interval 144-184 (NEALLALEALGFKREKIVKILPDLKSTSTSELVKEALKKLA) is domain III.

This sequence belongs to the RuvA family. In terms of assembly, homotetramer. Forms an RuvA(8)-RuvB(12)-Holliday junction (HJ) complex. HJ DNA is sandwiched between 2 RuvA tetramers; dsDNA enters through RuvA and exits via RuvB. An RuvB hexamer assembles on each DNA strand where it exits the tetramer. Each RuvB hexamer is contacted by two RuvA subunits (via domain III) on 2 adjacent RuvB subunits; this complex drives branch migration. In the full resolvosome a probable DNA-RuvA(4)-RuvB(12)-RuvC(2) complex forms which resolves the HJ.

It is found in the cytoplasm. The RuvA-RuvB-RuvC complex processes Holliday junction (HJ) DNA during genetic recombination and DNA repair, while the RuvA-RuvB complex plays an important role in the rescue of blocked DNA replication forks via replication fork reversal (RFR). RuvA specifically binds to HJ cruciform DNA, conferring on it an open structure. The RuvB hexamer acts as an ATP-dependent pump, pulling dsDNA into and through the RuvAB complex. HJ branch migration allows RuvC to scan DNA until it finds its consensus sequence, where it cleaves and resolves the cruciform DNA. In Campylobacter curvus (strain 525.92), this protein is Holliday junction branch migration complex subunit RuvA.